Reading from the N-terminus, the 203-residue chain is Recombination protein RecR (203 aa).

Residues 56 to 71 form a C4-type zinc finger; that stretch reads CTVCGNVSDDERCRIC. In terms of domain architecture, Toprim spans 79-179; the sequence is SVVCVVEEPK…TVTRIASGLP (101 aa).

It belongs to the RecR family.

Functionally, may play a role in DNA repair. It seems to be involved in an RecBC-independent recombinational process of DNA repair. It may act with RecF and RecO. The chain is Recombination protein RecR from Mycobacterium leprae (strain TN).